Consider the following 719-residue polypeptide: Leucine-rich repeat and fibronectin type-III domain-containing protein 5 (719 aa).

The first 17 residues, 1–17 (MEKFLFYLFLIGIAVRA), serve as a signal peptide directing secretion. An LRRNT domain is found at 18–51 (QICPKRCVCQILSPNLATLCAKKGLLFVPPNIDR). Residues 18-529 (QICPKRCVCQ…MQSQFLGGTM (512 aa)) lie on the Extracellular side of the membrane. 7 LRR repeats span residues 52-73 (RTVELRLADNFVTNIKRKDFAN), 76-97 (SLVDLTLSRNTISFITPHAFAD), 100-121 (NLRALHLNSNRLTKITNDMFSG), 124-145 (NLHHLILNNNQLTLISSTAFDD), 148-169 (ALEELDLSYNNLETIPWDAVEK), 172-193 (SLHTLSLDHNMIDNIPKGTFSH), and 196-217 (KMTRLDVTSNKLQKLPPDPLFQ). N73 carries an N-linked (GlcNAc...) asparagine glycan. Residues 240-286 (NPLHCNCELLWLRRLSREDDLETCASPALLTGRYFWSIPEEEFLCEP) form the LRRCT domain. The Ig-like domain maps to 287-373 (PLITRHTHEM…GEATQTVDLH (87 aa)). A disulfide bridge connects residues C308 and C357. 5 N-linked (GlcNAc...) asparagine glycosylation sites follow: N330, N339, N382, N406, and N452. The disordered stretch occupies residues 385 to 416 (NHIHEPDPGSSDISTSTKSGSNASSSNGDTKM). Positions 393-412 (GSSDISTSTKSGSNASSSNG) are enriched in low complexity. The 90-residue stretch at 414–503 (TKMSQDKIVV…ITSLTATRVV (90 aa)) folds into the Fibronectin type-III domain. Residues 530–550 (IIIIGGIIVASVLVFIIILMI) form a helical membrane-spanning segment. Residues 551–719 (RYKVCNNNGQ…VQETQRLESI (169 aa)) lie on the Cytoplasmic side of the membrane. Residues 614–627 (SETCSSQDSSTTTS) show a composition bias toward low complexity. Residues 614 to 719 (SETCSSQDSS…VQETQRLESI (106 aa)) form a disordered region. Polar residues-rich tracts occupy residues 628 to 641 (ALPPTWTSSAPVSQ), 654 to 677 (EPQSEAVTNVESQNTNRNNSTALQ), and 702 to 713 (LLTNVDQNVQET).

This sequence belongs to the LRFN family. As to quaternary structure, can form heteromeric complexes with LRFN1, LRFN2, LRFN3 and LFRN4. Able to form homomeric complexes across cell junctions, between adjacent cells. Does not interact with DLG1, DLG2 or DLG3. Does not interact with DLG4. Post-translationally, glycosylated. Predominantly expressed in the brain, with a weak, but broad expression in the cerebral cortex and diencephalic nuclei. Strongly expressed in both the pyramidal layer and the dentate gyrus of the hippocampus. Also detected in other parts of the central nervous system, including the olfactory bulb, pons, cerebellum, and medulla oblongata, as well as in the peripheral nervous system, such as the ganglia of cranial nerves and the dorsal root ganglion during gestation.

The protein localises to the membrane. In terms of biological role, cell adhesion molecule that mediates homophilic cell-cell adhesion in a Ca(2+)-independent manner. Promotes neurite outgrowth in hippocampal neurons. This chain is Leucine-rich repeat and fibronectin type-III domain-containing protein 5 (Lrfn5), found in Mus musculus (Mouse).